The chain runs to 389 residues: NADH-dependent butanol dehydrogenase A (389 aa).

This sequence belongs to the iron-containing alcohol dehydrogenase family. Homodimer.

Its pathway is alcohol metabolism; butanol biosynthesis. In Clostridium acetobutylicum (strain ATCC 824 / DSM 792 / JCM 1419 / IAM 19013 / LMG 5710 / NBRC 13948 / NRRL B-527 / VKM B-1787 / 2291 / W), this protein is NADH-dependent butanol dehydrogenase A (bdhA).